We begin with the raw amino-acid sequence, 245 residues long: Pyridoxine 5'-phosphate synthase (245 aa).

A 3-amino-2-oxopropyl phosphate-binding site is contributed by Asn7. Position 9–10 (9–10) interacts with 1-deoxy-D-xylulose 5-phosphate; sequence DH. Residue Arg18 participates in 3-amino-2-oxopropyl phosphate binding. His43 (proton acceptor) is an active-site residue. 1-deoxy-D-xylulose 5-phosphate contacts are provided by Arg45 and His50. Glu70 serves as the catalytic Proton acceptor. Residue Thr100 participates in 1-deoxy-D-xylulose 5-phosphate binding. Catalysis depends on His190, which acts as the Proton donor. Residues Gly191 and 212 to 213 contribute to the 3-amino-2-oxopropyl phosphate site; that span reads GH.

This sequence belongs to the PNP synthase family. Homooctamer; tetramer of dimers.

The protein localises to the cytoplasm. It catalyses the reaction 3-amino-2-oxopropyl phosphate + 1-deoxy-D-xylulose 5-phosphate = pyridoxine 5'-phosphate + phosphate + 2 H2O + H(+). Its pathway is cofactor biosynthesis; pyridoxine 5'-phosphate biosynthesis; pyridoxine 5'-phosphate from D-erythrose 4-phosphate: step 5/5. Its function is as follows. Catalyzes the complicated ring closure reaction between the two acyclic compounds 1-deoxy-D-xylulose-5-phosphate (DXP) and 3-amino-2-oxopropyl phosphate (1-amino-acetone-3-phosphate or AAP) to form pyridoxine 5'-phosphate (PNP) and inorganic phosphate. This Prochlorococcus marinus (strain NATL2A) protein is Pyridoxine 5'-phosphate synthase.